The following is a 239-amino-acid chain: Aspartate/glutamate leucyltransferase (239 aa).

The protein belongs to the R-transferase family. Bpt subfamily.

It is found in the cytoplasm. It carries out the reaction N-terminal L-glutamyl-[protein] + L-leucyl-tRNA(Leu) = N-terminal L-leucyl-L-glutamyl-[protein] + tRNA(Leu) + H(+). The catalysed reaction is N-terminal L-aspartyl-[protein] + L-leucyl-tRNA(Leu) = N-terminal L-leucyl-L-aspartyl-[protein] + tRNA(Leu) + H(+). Its function is as follows. Functions in the N-end rule pathway of protein degradation where it conjugates Leu from its aminoacyl-tRNA to the N-termini of proteins containing an N-terminal aspartate or glutamate. This Campylobacter jejuni (strain RM1221) protein is Aspartate/glutamate leucyltransferase.